A 1156-amino-acid chain; its full sequence is Nuclear pore-associated protein 1 (1156 aa).

Disordered stretches follow at residues Met-1–Ser-60, Glu-155–Ser-204, Asn-219–Ala-266, Gly-481–Ser-515, Thr-680–Thr-703, Asn-732–Leu-786, Ser-872–Ile-915, and Ala-1026–Pro-1046. Over residues Leu-50–Pro-59 the composition is skewed to basic residues. Basic and acidic residues predominate over residues Gly-156 to Asp-165. 2 stretches are compositionally biased toward polar residues: residues Pro-179–Asp-197 and Asn-219–Ser-231. 4 stretches are compositionally biased toward polar residues: residues Thr-680 to Lys-692, Asn-732 to Ala-750, Thr-884 to Ile-915, and Gly-1028 to Pro-1046.

In terms of assembly, associates with the nuclear pore complex (NPC). As to expression, testis-specific in adults. In fetal brain expressed only from the paternal allele.

Its subcellular location is the nucleus. It is found in the nucleoplasm. It localises to the nucleus inner membrane. Its function is as follows. May be involved in spermatogenesis. The chain is Nuclear pore-associated protein 1 (NPAP1) from Homo sapiens (Human).